The chain runs to 88 residues: UPF0297 protein YrzL (88 aa).

Belongs to the UPF0297 family.

This chain is UPF0297 protein YrzL (yrzL), found in Bacillus subtilis (strain 168).